A 158-amino-acid polypeptide reads, in one-letter code: Heavy metal-associated isoprenylated plant protein 23 (158 aa).

An HMA domain is found at 31–94; it reads FQTVELKVRM…KAKATGKKAE (64 aa). Positions 42 and 45 each coordinate a metal cation. Position 155 is a cysteine methyl ester (cysteine 155). Cysteine 155 carries the S-farnesyl cysteine lipid modification. Residues 156–158 constitute a propeptide, removed in mature form; that stretch reads SIM.

The protein belongs to the HIPP family. Interacts with ZHD11/HB29.

In terms of biological role, heavy-metal-binding protein. The chain is Heavy metal-associated isoprenylated plant protein 23 from Arabidopsis thaliana (Mouse-ear cress).